Here is a 2492-residue protein sequence, read N- to C-terminus: Transcriptional regulator ATRX (2492 aa).

Residues 1-146 (MTAEPMSESK…DKDDFKGPEF (146 aa)) form a disordered region. Lys10 is covalently cross-linked (Glycyl lysine isopeptide (Lys-Gly) (interchain with G-Cter in SUMO2)). Residues 17–27 (KLHDFLAHSSE) show a composition bias toward basic and acidic residues. Phosphoserine is present on residues Ser25 and Ser34. The segment covering 40 to 57 (MNQNTDKISGSGSNSDMM) has biased composition (polar residues). Basic and acidic residues predominate over residues 58–72 (ENSKEEGTSSSEKSK). The residue at position 89 (Tyr89) is a Phosphotyrosine. Ser92 and Ser112 each carry phosphoserine. Positions 92 to 108 (SDDEKPLDDETVNEDAS) are enriched in acidic residues. Positions 135 to 146 (NEDKDDFKGPEF) are enriched in basic and acidic residues. Glycyl lysine isopeptide (Lys-Gly) (interchain with G-Cter in SUMO2) cross-links involve residues Lys138 and Lys142. Residues 159–296 (KRGEDGLHGI…LEQLLQQNKK (138 aa)) form the ADD domain. A GATA-type; atypical zinc finger spans residues 170 to 206 (SCTACGQQVNHFQKDSIYRHPSLQVLICKNCFKYYMS). Ser213 bears the Phosphoserine mark. A PHD-type; atypical zinc finger spans residues 217 to 272 (DEQCRWCAEGGNLICCDFCHNAFCKKCILRNLGRKELSTIMDENNQWYCYICHPEP). Lys299 participates in a covalent cross-link: Glycyl lysine isopeptide (Lys-Gly) (interchain with G-Cter in SUMO2). Ser316 is subject to Phosphoserine. A Glycyl lysine isopeptide (Lys-Gly) (interchain with G-Cter in SUMO2) cross-link involves residue Lys438. Residues 445–502 (KGEKPCALEKKDISKSEAKLSRKQVDSEHMDQNVPTEEQRANKSTGGEHKKSDRKEEP) are compositionally biased toward basic and acidic residues. The tract at residues 445-614 (KGEKPCALEK…CQEVPQDKDG (170 aa)) is disordered. A compositionally biased stretch (polar residues) spans 550-567 (SGTEQEVESSSVKLNISS). Residues 581–594 (KVTKELYVKLTPVS) carry the PxVxL motif motif. Position 591 is a phosphothreonine (Thr591). Phosphoserine is present on residues Ser594 and Ser598. A Glycyl lysine isopeptide (Lys-Gly) (interchain with G-Cter in SUMO1); alternate cross-link involves residue Lys623. Residue Lys623 forms a Glycyl lysine isopeptide (Lys-Gly) (interchain with G-Cter in SUMO2); alternate linkage. Ser634 is modified (phosphoserine). The tract at residues 648 to 1479 (LEESDLRRSP…SKSPGKGRKK (832 aa)) is disordered. The residue at position 674 (Thr674) is a Phosphothreonine. A phosphoserine mark is found at Ser675, Ser677, Ser729, and Ser731. A compositionally biased stretch (basic and acidic residues) spans 755 to 777 (NEIHTNHKTLYDLKTQAGKDDKG). Residues Ser784, Ser819, Ser849, Ser850, Ser875, and Ser876 each carry the phosphoserine modification. Basic and acidic residues predominate over residues 843 to 864 (NTKDFDSSEDEKHSKKGMDNQG). The span at 878-887 (DAERKQEREN) shows a compositional bias: basic and acidic residues. Phosphoserine is present on Ser889. 2 stretches are compositionally biased toward basic and acidic residues: residues 894 to 909 (TVDKDTTIMELRDRLP) and 920 to 944 (GVDKFSGKEESFTSLEVRKVAETKE). Basic residues predominate over residues 945–955 (KSKHLKTKTCK). At Ser962 the chain carries Phosphoserine. Over residues 964-1004 (TAEKFLKKDQSDETSEDDKKQSKKGTEEKKKPSDFKKKVIK) the composition is skewed to basic and acidic residues. N6-acetyllysine is present on Lys967. A Phosphoserine modification is found at Ser974. Position 977 is a phosphothreonine (Thr977). Lys1004 participates in a covalent cross-link: Glycyl lysine isopeptide (Lys-Gly) (interchain with G-Cter in SUMO2). Ser1011, Ser1012, and Ser1013 each carry phosphoserine. Residues 1015 to 1027 (GTEKLPEREEICH) are compositionally biased toward basic and acidic residues. Basic residues predominate over residues 1045–1055 (KSKKIRDKTSK). Residues 1056–1082 (KKDELSDYAEKSTGKGDSCDSSEDKKS) show a composition bias toward basic and acidic residues. The residue at position 1061 (Ser1061) is a Phosphoserine. Tyr1063 carries the phosphotyrosine modification. A compositionally biased stretch (basic residues) spans 1090-1102 (EKKRCKLLGKSSR). Basic and acidic residues predominate over residues 1103–1139 (KRQDCSSSDTEKYSMKEDGCNSSDKRLKRIELRERRN). Basic residues predominate over residues 1168–1195 (KQQRTSSKKKAVIVKEKKRNSLRTSTKR). Residues 1189–1326 (LRTSTKRKQA…KNQVNSESDS (138 aa)) form an interaction with DAXX region. A compositionally biased stretch (polar residues) spans 1233 to 1246 (LVLSSHTGFCQSSG). 3 positions are modified to phosphoserine: Ser1244, Ser1245, and Ser1253. Basic and acidic residues predominate over residues 1267 to 1281 (PENRIAKKMLLEEIK). Acidic residues predominate over residues 1286-1297 (SDEDGSSDDEPE). Residues 1298 to 1308 (EGKKRTGKQNE) are compositionally biased toward basic and acidic residues. Phosphoserine is present on residues Ser1322, Ser1324, and Ser1326. Positions 1334–1345 (PRYRHRLLRHKL) are enriched in basic residues. 2 positions are modified to phosphoserine: Ser1348 and Ser1352. Basic and acidic residues-rich tracts occupy residues 1353-1368 (GEEKKTKPKEHKEVKG) and 1408-1417 (KKAELEENQR). Basic residues predominate over residues 1419–1428 (YKQKKKRRRI). A compositionally biased stretch (acidic residues) spans 1443 to 1468 (EEEEEEKEEEEEEEEEEEEEEEDEND). Residue Lys1488 forms a Glycyl lysine isopeptide (Lys-Gly) (interchain with G-Cter in SUMO2) linkage. Phosphoserine is present on Ser1527. Thr1529 carries the phosphothreonine modification. Residues 1581 to 1768 (KTKKSPGSGC…HCMVNFIKEN (188 aa)) form the Helicase ATP-binding domain. 1594-1601 (HCMGLGKT) contributes to the ATP binding site. Positions 1719 to 1722 (DEGH) match the DEGH box motif. Phosphoserine is present on residues Ser1906 and Ser1913. Residues 1913–2000 (SDSDETSMSL…SSNPSSPAPD (88 aa)) are disordered. Residues 1929–1938 (KKKKKGKKGK) show a composition bias toward basic residues. Lys1982 participates in a covalent cross-link: Glycyl lysine isopeptide (Lys-Gly) (interchain with G-Cter in SUMO1); alternate. Residue Lys1982 forms a Glycyl lysine isopeptide (Lys-Gly) (interchain with G-Cter in SUMO2); alternate linkage. A Glycyl lysine isopeptide (Lys-Gly) (interchain with G-Cter in SUMO2) cross-link involves residue Lys1987. Residues 1990–1999 (SSSNPSSPAP) are compositionally biased toward low complexity. A phosphoserine mark is found at Ser1992 and Ser1996. The interval 2010–2280 (DAEVLEHSGK…RKAAWAEYEA (271 aa)) is interaction with MECP2. A Helicase C-terminal domain is found at 2025 to 2205 (EILRMAEEIG…ERHFTMNELT (181 aa)). Ser2220 is subject to Phosphoserine. The tract at residues 2462 to 2492 (PVAGGMQPPPLQRAPPPMRSKNPGPSQGKSM) is disordered. Positions 2468 to 2479 (QPPPLQRAPPPM) are enriched in pro residues. Omega-N-methylarginine is present on residues Arg2474 and Arg2480.

The protein belongs to the SNF2/RAD54 helicase family. As to quaternary structure, interacts with DAXX to form the chromatin remodeling complex ATRX:DAXX. Probably binds EZH2. Binds annexin V in a calcium and phosphatidylcholine/phosphatidylserine-dependent manner. Interacts directly with CBX5 via the PxVxL motif. Interacts with RAD50, MRE11 and NBN; indicative for an association with the MRN complex. Interacts with histone MACROH2A1. Interacts with histone H3 peptides methylated at 'Lys-10' with preferences H3K9me3 &gt; H3K9me2 &gt; H3K9me1. Interacts with histone H3 peptides unmethylated at 'Lys-5' (H3K4me0). Interacts with MECP2, SMC1 and SMC3. Interacts with SETDB1, TRIM28 and ZNF274.

It is found in the nucleus. Its subcellular location is the chromosome. The protein resides in the telomere. The protein localises to the PML body. The catalysed reaction is ATP + H2O = ADP + phosphate + H(+). In terms of biological role, involved in transcriptional regulation and chromatin remodeling. Facilitates DNA replication in multiple cellular environments and is required for efficient replication of a subset of genomic loci. Binds to DNA tandem repeat sequences in both telomeres and euchromatin and in vitro binds DNA quadruplex structures. May help stabilizing G-rich regions into regular chromatin structures by remodeling G4 DNA and incorporating H3.3-containing nucleosomes. Catalytic component of the chromatin remodeling complex ATRX:DAXX which has ATP-dependent DNA translocase activity and catalyzes the replication-independent deposition of histone H3.3 in pericentric DNA repeats outside S-phase and telomeres, and the in vitro remodeling of H3.3-containing nucleosomes. Its heterochromatin targeting is proposed to involve a combinatorial readout of histone H3 modifications (specifically methylation states of H3K9 and H3K4) and association with CBX5. Involved in maintaining telomere structural integrity in embryonic stem cells which probably implies recruitment of CBX5 to telomeres. May be involved in transcriptional regulation of telomeric repeat-containing RNA (TERRA). Acts as a negative regulator of chromatin incorporation of transcriptionally repressive histone MACROH2A1, particularily at telomeres. Participates in the allele-specific gene expression at the imprinted IGF2/H19 gene locus. On the maternal allele, required for the chromatin occupancy of SMC1 and CTCTF within the H19 imprinting control region (ICR) and involved in esatblishment of histone tails modifications in the ICR. May be involved in brain development and facial morphogenesis. Binds to zinc-finger coding genes with atypical chromatin signatures and regulates its H3K9me3 levels. Forms a complex with ZNF274, TRIM28 and SETDB1 to facilitate the deposition and maintenance of H3K9me3 at the 3' exons of zinc-finger genes. The polypeptide is Transcriptional regulator ATRX (ATRX) (Pan troglodytes (Chimpanzee)).